The following is a 316-amino-acid chain: Ribosomal RNA small subunit methyltransferase H (316 aa).

Residues 35–37, Asp-55, Phe-84, Asp-105, and Gln-112 contribute to the S-adenosyl-L-methionine site; that span reads AGH.

The protein belongs to the methyltransferase superfamily. RsmH family.

It is found in the cytoplasm. It catalyses the reaction cytidine(1402) in 16S rRNA + S-adenosyl-L-methionine = N(4)-methylcytidine(1402) in 16S rRNA + S-adenosyl-L-homocysteine + H(+). Specifically methylates the N4 position of cytidine in position 1402 (C1402) of 16S rRNA. In Streptococcus pneumoniae (strain 70585), this protein is Ribosomal RNA small subunit methyltransferase H.